The sequence spans 64 residues: Thrombin-like enzyme collinein-4 (64 aa).

2 disulfide bridges follow: Cys-5-Cys-23 and Cys-34-Cys-51.

Monomer. In terms of tissue distribution, expressed by the vanom gland.

Its subcellular location is the secreted. Functionally, thrombin-like snake venom serine protease. The protein is Thrombin-like enzyme collinein-4 of Crotalus durissus collilineatus (Brazilian rattlesnake).